A 257-amino-acid chain; its full sequence is Protein UL133 (257 aa).

2 consecutive transmembrane segments (helical) span residues 14 to 34 (WGVPTIIVAWITCAALGIWCL) and 45 to 65 (PGIAAVVGCSVFMIFLCAYLI). The disordered stretch occupies residues 149-232 (PTVFVPPPSE…AMPQMPPGVA (84 aa)). Pro residues predominate over residues 164–175 (VIPPQPPTPTSE). Positions 179 to 193 (KKGRAKDKPKGRPKN) are enriched in basic residues. Pro residues predominate over residues 214 to 228 (GGPPDASPPAMPQMP).

It localises to the host Golgi apparatus membrane. This chain is Protein UL133 (UL133), found in Human cytomegalovirus (strain Merlin) (HHV-5).